Reading from the N-terminus, the 438-residue chain is Argininosuccinate lyase (438 aa).

It belongs to the lyase 1 family. Argininosuccinate lyase subfamily.

It is found in the cytoplasm. It carries out the reaction 2-(N(omega)-L-arginino)succinate = fumarate + L-arginine. Its pathway is amino-acid biosynthesis; L-arginine biosynthesis; L-arginine from L-ornithine and carbamoyl phosphate: step 3/3. This Clostridium tetani (strain Massachusetts / E88) protein is Argininosuccinate lyase.